The sequence spans 2266 residues: RNA1 polyprotein (2266 aa).

Over 566 to 1158 (LCTALAAGIF…AGRDYLVQNG (593 aa)) the chain is Cytoplasmic. Residues 751–917 (MKDLVELHKR…PGVIYDPENP (167 aa)) form the SF3 helicase domain. Residue 781-788 (GQRHCGKS) coordinates ATP. The helical transmembrane segment at 1159–1179 (CGILMIAAALILILVSGWGFW) threads the bilayer. The Lumenal portion of the chain corresponds to 1180–1205 (KLFVGLFSGTMSLGAAITGMSAVDIK). Positions 1229–1438 (AYARSQAGDG…WADIMPPNSL (210 aa)) constitute a Peptidase C3 domain. Catalysis depends on for picornain 3C-like protease activity residues His1272, Glu1310, and Cys1402. The 129-residue stretch at 1715–1843 (NEAINCDYSG…SVSPSIASWF (129 aa)) folds into the RdRp catalytic domain.

Belongs to the nepoviruses RNA1 polyprotein family. In terms of processing, specific enzymatic cleavages by picornain 3C-like protease in vivo yield mature proteins. Picornain 3C-like protease is autocatalytically processed. VPg is uridylylated by the polymerase and is covalently linked to the 5'-end of genomic RNA. This uridylylated form acts as a nucleotide-peptide primer for the polymerase.

The protein localises to the host endoplasmic reticulum lumen. It is found in the host endoplasmic reticulum membrane. It catalyses the reaction RNA(n) + a ribonucleoside 5'-triphosphate = RNA(n+1) + diphosphate. Functionally, picornain 3C-like protease is a thiol protease that cleaves the P1 and P2 polyproteins. The chain is RNA1 polyprotein from Tomato black ring virus (strain MJ) (TBRV).